Reading from the N-terminus, the 352-residue chain is Ion-translocating oxidoreductase complex subunit D (352 aa).

Transmembrane regions (helical) follow at residues 20 to 40, 42 to 62, 89 to 109, and 123 to 143; these read IMLL…CFFG, GTLV…ALVL, IPPL…VIIA, and PAMI…TSWL. FMN phosphoryl threonine is present on Thr187. Transmembrane regions (helical) follow at residues 215–235, 242–262, 267–287, 301–321, and 322–342; these read LAGA…VWLL, WHIP…GWLF, LAAP…FFIL, LIFG…GGYP, and DGVA…DYYT.

Belongs to the NqrB/RnfD family. As to quaternary structure, the complex is composed of six subunits: RsxA, RsxB, RsxC, RsxD, RsxE and RsxG. FMN serves as cofactor.

It localises to the cell inner membrane. Its function is as follows. Part of a membrane-bound complex that couples electron transfer with translocation of ions across the membrane. Required to maintain the reduced state of SoxR. This is Ion-translocating oxidoreductase complex subunit D from Escherichia coli O7:K1 (strain IAI39 / ExPEC).